Reading from the N-terminus, the 182-residue chain is Photosystem I assembly protein Ycf4 (182 aa).

Transmembrane regions (helical) follow at residues 22–42 and 66–86; these read WAII…SSYL and FYGI…LFSV.

Belongs to the Ycf4 family.

The protein localises to the plastid. Its subcellular location is the chloroplast thylakoid membrane. Its function is as follows. Seems to be required for the assembly of the photosystem I complex. In Tupiella akineta (Green alga), this protein is Photosystem I assembly protein Ycf4.